The primary structure comprises 616 residues: Dihydroxy-acid dehydratase (616 aa).

Position 81 (aspartate 81) interacts with Mg(2+). Cysteine 122 serves as a coordination point for [2Fe-2S] cluster. Mg(2+)-binding residues include aspartate 123 and lysine 124. N6-carboxylysine is present on lysine 124. [2Fe-2S] cluster is bound at residue cysteine 195. Glutamate 491 contacts Mg(2+). The Proton acceptor role is filled by serine 517.

The protein belongs to the IlvD/Edd family. As to quaternary structure, homodimer. [2Fe-2S] cluster is required as a cofactor. Requires Mg(2+) as cofactor.

The catalysed reaction is (2R)-2,3-dihydroxy-3-methylbutanoate = 3-methyl-2-oxobutanoate + H2O. The enzyme catalyses (2R,3R)-2,3-dihydroxy-3-methylpentanoate = (S)-3-methyl-2-oxopentanoate + H2O. It functions in the pathway amino-acid biosynthesis; L-isoleucine biosynthesis; L-isoleucine from 2-oxobutanoate: step 3/4. Its pathway is amino-acid biosynthesis; L-valine biosynthesis; L-valine from pyruvate: step 3/4. Functions in the biosynthesis of branched-chain amino acids. Catalyzes the dehydration of (2R,3R)-2,3-dihydroxy-3-methylpentanoate (2,3-dihydroxy-3-methylvalerate) into 2-oxo-3-methylpentanoate (2-oxo-3-methylvalerate) and of (2R)-2,3-dihydroxy-3-methylbutanoate (2,3-dihydroxyisovalerate) into 2-oxo-3-methylbutanoate (2-oxoisovalerate), the penultimate precursor to L-isoleucine and L-valine, respectively. This chain is Dihydroxy-acid dehydratase, found in Klebsiella pneumoniae (strain 342).